A 658-amino-acid polypeptide reads, in one-letter code: Threonine--tRNA ligase (658 aa).

Residues Met1–Thr64 enclose the TGS domain. The interval Asp246–Pro549 is catalytic. Cys343, His394, and His526 together coordinate Zn(2+).

Belongs to the class-II aminoacyl-tRNA synthetase family. As to quaternary structure, homodimer. Zn(2+) serves as cofactor.

It localises to the cytoplasm. It catalyses the reaction tRNA(Thr) + L-threonine + ATP = L-threonyl-tRNA(Thr) + AMP + diphosphate + H(+). Its function is as follows. Catalyzes the attachment of threonine to tRNA(Thr) in a two-step reaction: L-threonine is first activated by ATP to form Thr-AMP and then transferred to the acceptor end of tRNA(Thr). Also edits incorrectly charged L-seryl-tRNA(Thr). The polypeptide is Threonine--tRNA ligase (Bartonella tribocorum (strain CIP 105476 / IBS 506)).